A 295-amino-acid chain; its full sequence is Pyridoxal 5'-phosphate synthase subunit PdxS (295 aa).

Asp25 provides a ligand contact to D-ribose 5-phosphate. The active-site Schiff-base intermediate with D-ribose 5-phosphate is the Lys82. Gly154 provides a ligand contact to D-ribose 5-phosphate. Arg166 is a binding site for D-glyceraldehyde 3-phosphate. D-ribose 5-phosphate-binding positions include Gly215 and 236-237 (GS).

It belongs to the PdxS/SNZ family. In terms of assembly, in the presence of PdxT, forms a dodecamer of heterodimers.

It carries out the reaction aldehydo-D-ribose 5-phosphate + D-glyceraldehyde 3-phosphate + L-glutamine = pyridoxal 5'-phosphate + L-glutamate + phosphate + 3 H2O + H(+). It functions in the pathway cofactor biosynthesis; pyridoxal 5'-phosphate biosynthesis. In terms of biological role, catalyzes the formation of pyridoxal 5'-phosphate from ribose 5-phosphate (RBP), glyceraldehyde 3-phosphate (G3P) and ammonia. The ammonia is provided by the PdxT subunit. Can also use ribulose 5-phosphate and dihydroxyacetone phosphate as substrates, resulting from enzyme-catalyzed isomerization of RBP and G3P, respectively. The polypeptide is Pyridoxal 5'-phosphate synthase subunit PdxS (Listeria innocua serovar 6a (strain ATCC BAA-680 / CLIP 11262)).